Reading from the N-terminus, the 142-residue chain is Nucleoside diphosphate kinase (142 aa).

ATP-binding residues include lysine 9, phenylalanine 57, arginine 85, threonine 91, arginine 102, and asparagine 112. Histidine 115 functions as the Pros-phosphohistidine intermediate in the catalytic mechanism.

It belongs to the NDK family. In terms of assembly, homotetramer. Mg(2+) serves as cofactor.

It localises to the cytoplasm. It catalyses the reaction a 2'-deoxyribonucleoside 5'-diphosphate + ATP = a 2'-deoxyribonucleoside 5'-triphosphate + ADP. It carries out the reaction a ribonucleoside 5'-diphosphate + ATP = a ribonucleoside 5'-triphosphate + ADP. Major role in the synthesis of nucleoside triphosphates other than ATP. The ATP gamma phosphate is transferred to the NDP beta phosphate via a ping-pong mechanism, using a phosphorylated active-site intermediate. This is Nucleoside diphosphate kinase from Dehalococcoides mccartyi (strain ATCC BAA-2100 / JCM 16839 / KCTC 5957 / BAV1).